A 102-amino-acid chain; its full sequence is Small ribosomal subunit protein uS10 (102 aa).

Belongs to the universal ribosomal protein uS10 family. In terms of assembly, part of the 30S ribosomal subunit.

In terms of biological role, involved in the binding of tRNA to the ribosomes. This Mycoplasma mobile (strain ATCC 43663 / 163K / NCTC 11711) (Mesomycoplasma mobile) protein is Small ribosomal subunit protein uS10.